The sequence spans 415 residues: F-box/kelch-repeat protein At2g29600 (415 aa).

Residues Met1–Pro58 are disordered. Residues Gln19–Asp45 show a composition bias toward basic and acidic residues. In terms of domain architecture, F-box spans Gln56–Leu103. Kelch repeat units follow at residues Lys161–Gly208, Ile210–His254, Lys260–Pro309, and His311–Ile355.

The sequence is that of F-box/kelch-repeat protein At2g29600 from Arabidopsis thaliana (Mouse-ear cress).